We begin with the raw amino-acid sequence, 198 residues long: Glycerol-3-phosphate acyltransferase 1 (198 aa).

5 consecutive transmembrane segments (helical) span residues 5-25, 52-72, 81-101, 111-131, and 138-158; these read ALLA…AWLA, GPAL…VLLA, WAAL…FLAF, FGVI…LAIA, and FVSA…LVLP.

Belongs to the PlsY family. In terms of assembly, probably interacts with PlsX.

Its subcellular location is the cell membrane. It carries out the reaction an acyl phosphate + sn-glycerol 3-phosphate = a 1-acyl-sn-glycero-3-phosphate + phosphate. It participates in lipid metabolism; phospholipid metabolism. Functionally, catalyzes the transfer of an acyl group from acyl-phosphate (acyl-PO(4)) to glycerol-3-phosphate (G3P) to form lysophosphatidic acid (LPA). This enzyme utilizes acyl-phosphate as fatty acyl donor, but not acyl-CoA or acyl-ACP. In Deinococcus radiodurans (strain ATCC 13939 / DSM 20539 / JCM 16871 / CCUG 27074 / LMG 4051 / NBRC 15346 / NCIMB 9279 / VKM B-1422 / R1), this protein is Glycerol-3-phosphate acyltransferase 1.